Consider the following 130-residue polypeptide: Small ribosomal subunit protein uS8 (130 aa).

Belongs to the universal ribosomal protein uS8 family. Part of the 30S ribosomal subunit. Contacts proteins S5 and S12.

In terms of biological role, one of the primary rRNA binding proteins, it binds directly to 16S rRNA central domain where it helps coordinate assembly of the platform of the 30S subunit. This is Small ribosomal subunit protein uS8 from Marinomonas sp. (strain MWYL1).